The chain runs to 478 residues: DNA gyrase subunit B (478 aa).

A Toprim domain is found at 319-438 (CEIYLVEGDS…GGHVYIAQPP (120 aa)). The Mg(2+) site is built by glutamate 325, aspartate 403, and aspartate 405.

The protein belongs to the type II topoisomerase GyrB family. Heterotetramer, composed of two GyrA and two GyrB chains. In the heterotetramer, GyrA contains the active site tyrosine that forms a transient covalent intermediate with DNA, while GyrB binds cofactors and catalyzes ATP hydrolysis. Mg(2+) serves as cofactor. Requires Mn(2+) as cofactor. It depends on Ca(2+) as a cofactor.

It localises to the cytoplasm. It carries out the reaction ATP-dependent breakage, passage and rejoining of double-stranded DNA.. Functionally, a type II topoisomerase that negatively supercoils closed circular double-stranded (ds) DNA in an ATP-dependent manner to modulate DNA topology and maintain chromosomes in an underwound state. Negative supercoiling favors strand separation, and DNA replication, transcription, recombination and repair, all of which involve strand separation. Also able to catalyze the interconversion of other topological isomers of dsDNA rings, including catenanes and knotted rings. Type II topoisomerases break and join 2 DNA strands simultaneously in an ATP-dependent manner. In Cytophaga aurantiaca, this protein is DNA gyrase subunit B (gyrB).